The sequence spans 79 residues: U1-plectoxin-Pt1c (79 aa).

The N-terminal stretch at 1–18 is a signal peptide; the sequence is HLILASALICALVVCTFA. Residues 19–31 constitute a propeptide that is removed on maturation; the sequence is EEQVNVPFLPDER. Cystine bridges form between Cys35-Cys49, Cys42-Cys55, Cys48-Cys66, Cys52-Cys75, and Cys57-Cys64. Residues 78 to 79 constitute a propeptide that is removed on maturation; sequence RR.

The protein belongs to the neurotoxin 02 (plectoxin) family. 02 (plectoxin) subfamily. Expressed by the venom gland.

The protein localises to the secreted. Potent toxin that may paralyze and/or kill insect pests such as H.virescens (lepidoptera), S.exigua (beet armyworm) and M.sexta (tobacco hornworm). The sequence is that of U1-plectoxin-Pt1c from Plectreurys tristis (Spider).